A 301-amino-acid chain; its full sequence is Heterogeneous nuclear ribonucleoprotein D-like (301 aa).

Residues Met-1–Asp-29 form a disordered region. 2 consecutive RRM domains span residues Gly-30–Glu-112 and Lys-115–Glu-194. Disordered stretches follow at residues Glu-194–Gln-230 and Gly-269–Tyr-301. The span at Gly-212 to Gln-224 shows a compositional bias: gly residues.

It localises to the nucleus. The protein resides in the cytoplasm. In terms of biological role, acts as a transcriptional regulator. Binds DNA and RNA. The protein is Heterogeneous nuclear ribonucleoprotein D-like (HNRNPDL) of Gallus gallus (Chicken).